Here is a 105-residue protein sequence, read N- to C-terminus: Saimiri transformation-associated protein (105 aa).

Residues 1–75 (MASEPNLRYP…GPPGPSGLPG (75 aa)) are Cytoplasmic-facing. The segment at 1–75 (MASEPNLRYP…GPPGPSGLPG (75 aa)) is disordered. A Collagen-like domain is found at 15-74 (GDRGPQGPPGPPGPQGPPGPQGPPGPQGPPGPQGPPGPQGPPGPQGPPGPPGPPGPSGLP). A compositionally biased stretch (pro residues) spans 20–71 (QGPPGPPGPQGPPGPQGPPGPQGPPGPQGPPGPQGPPGPQGPPGPPGPPGPS). Residues 76–96 (LFVTNLLLGIIILLLLIIVAI) form a helical membrane-spanning segment. The Extracellular segment spans residues 97–105 (LLVSKLVVN).

Binds to host RAS and TRAF2.

The protein localises to the host membrane. Acts synergistically with Tip to stimulate NF-kappa-B activity and interleukin-2 gene expression by binding to host TRAF proteins. Activation of NF-kappa-B protects lymphocytes from apoptosis, thereby facilitating viral induced cell transformation. The chain is Saimiri transformation-associated protein from Saimiriine herpesvirus 2 (strain 484-77) (SaHV-2).